Consider the following 395-residue polypeptide: L-rhamnonate dehydratase (395 aa).

Residues H23 and R49 each contribute to the substrate site. Positions 215, 241, and 269 each coordinate Mg(2+). H319 functions as the Proton acceptor in the catalytic mechanism. E339 is a substrate binding site.

Belongs to the mandelate racemase/muconate lactonizing enzyme family. RhamD subfamily. Homooctamer; tetramer of dimers. Requires Mg(2+) as cofactor.

The catalysed reaction is L-rhamnonate = 2-dehydro-3-deoxy-L-rhamnonate + H2O. Functionally, catalyzes the dehydration of L-rhamnonate to 2-keto-3-deoxy-L-rhamnonate (KDR). This chain is L-rhamnonate dehydratase, found in Delftia acidovorans (strain DSM 14801 / SPH-1).